The following is a 181-amino-acid chain: Oligoribonuclease (181 aa).

Positions 8-171 (LIWIDLEMTG…DDIRESVAEL (164 aa)) constitute an Exonuclease domain. Residue Tyr129 is part of the active site.

It belongs to the oligoribonuclease family.

Its subcellular location is the cytoplasm. In terms of biological role, 3'-to-5' exoribonuclease specific for small oligoribonucleotides. The protein is Oligoribonuclease of Klebsiella pneumoniae subsp. pneumoniae (strain ATCC 700721 / MGH 78578).